Here is a 483-residue protein sequence, read N- to C-terminus: Betaine aldehyde dehydrogenase (483 aa).

The K(+) site is built by I27 and D93. 149 to 151 contributes to the NAD(+) binding site; the sequence is GAW. Catalysis depends on K161, which acts as the Charge relay system. 175-178 contributes to the NAD(+) binding site; the sequence is KPSE. Position 179 (V179) interacts with K(+). An NAD(+)-binding site is contributed by 228 to 231; it reads SVPT. V243 contacts K(+). E249 serves as the catalytic Proton acceptor. Residues G251, C283, and E380 each contribute to the NAD(+) site. The active-site Nucleophile is the C283. A Cysteine sulfenic acid (-SOH) modification is found at C283. K(+) contacts are provided by K450 and G453. E457 (charge relay system) is an active-site residue.

Belongs to the aldehyde dehydrogenase family. Dimer of dimers. K(+) serves as cofactor.

The catalysed reaction is betaine aldehyde + NAD(+) + H2O = glycine betaine + NADH + 2 H(+). Its pathway is amine and polyamine biosynthesis; betaine biosynthesis via choline pathway; betaine from betaine aldehyde: step 1/1. In terms of biological role, involved in the biosynthesis of the osmoprotectant glycine betaine. Catalyzes the irreversible oxidation of betaine aldehyde to the corresponding acid. This Cereibacter sphaeroides (strain ATCC 17023 / DSM 158 / JCM 6121 / CCUG 31486 / LMG 2827 / NBRC 12203 / NCIMB 8253 / ATH 2.4.1.) (Rhodobacter sphaeroides) protein is Betaine aldehyde dehydrogenase.